The following is a 67-amino-acid chain: VLIIAVLFLTACQLIATASYARSERKHPDLRLSSRNSKLSKRCLGSGELCVRDTSCCSMSCTNNICF.

Residues 1-17 (VLIIAVLFLTACQLIAT) form the signal peptide. Residues 18–40 (ASYARSERKHPDLRLSSRNSKLS) constitute a propeptide that is removed on maturation. 3 disulfides stabilise this stretch: Cys43/Cys57, Cys50/Cys61, and Cys56/Cys66.

Belongs to the conotoxin O1 superfamily. As to expression, expressed by the venom duct.

It localises to the secreted. The polypeptide is Conotoxin AbVIM (Conus abbreviatus (Abbreviated cone)).